A 456-amino-acid polypeptide reads, in one-letter code: Adenylosuccinate lyase (456 aa).

N(6)-(1,2-dicarboxyethyl)-AMP-binding positions include 15–16 (RY) and 90–92 (NHD). Lys94 is subject to N6-acetyllysine. 122–123 (TS) provides a ligand contact to N(6)-(1,2-dicarboxyethyl)-AMP. The active-site Proton donor/acceptor is His171. Residue Gln247 coordinates N(6)-(1,2-dicarboxyethyl)-AMP. Ser295 (proton donor/acceptor) is an active-site residue. N(6)-(1,2-dicarboxyethyl)-AMP-binding positions include Ser296, 301 to 303 (KVN), Asn309, Arg335, and 340 to 344 (STVLR). At Lys366 the chain carries N6-acetyllysine.

The protein belongs to the lyase 1 family. Adenylosuccinate lyase subfamily. As to quaternary structure, homotetramer. Residues from neighboring subunits contribute catalytic and substrate-binding residues to each active site.

The catalysed reaction is N(6)-(1,2-dicarboxyethyl)-AMP = fumarate + AMP. It catalyses the reaction (2S)-2-[5-amino-1-(5-phospho-beta-D-ribosyl)imidazole-4-carboxamido]succinate = 5-amino-1-(5-phospho-beta-D-ribosyl)imidazole-4-carboxamide + fumarate. Its pathway is purine metabolism; AMP biosynthesis via de novo pathway; AMP from IMP: step 2/2. It functions in the pathway purine metabolism; IMP biosynthesis via de novo pathway; 5-amino-1-(5-phospho-D-ribosyl)imidazole-4-carboxamide from 5-amino-1-(5-phospho-D-ribosyl)imidazole-4-carboxylate: step 2/2. Catalyzes two reactions in de novo purine nucleotide biosynthesis. Catalyzes the breakdown of 5-aminoimidazole- (N-succinylocarboxamide) ribotide (SAICAR or 2-[5-amino-1-(5-phospho-beta-D-ribosyl)imidazole-4-carboxamido]succinate) to 5-aminoimidazole-4-carboxamide ribotide (AICAR or 5-amino-1-(5-phospho-beta-D-ribosyl)imidazole-4-carboxamide) and fumarate, and of adenylosuccinate (ADS or N(6)-(1,2-dicarboxyethyl)-AMP) to adenosine monophosphate (AMP) and fumarate. This is Adenylosuccinate lyase (purB) from Escherichia coli O6:H1 (strain CFT073 / ATCC 700928 / UPEC).